Reading from the N-terminus, the 261-residue chain is Cytochrome c oxidase subunit 3 (261 aa).

At 1–15 (MTHQTHAYHMVNPSP) the chain is on the mitochondrial matrix side. A helical transmembrane segment spans residues 16–34 (WPLTGALSALLMTSGLAMW). At 35–40 (FHFNST) the chain is on the mitochondrial intermembrane side. Residues 41–66 (LLLALGLLTNILTMYQWWRDIIREST) form a helical membrane-spanning segment. Residues 67–72 (FQGHHT) are Mitochondrial matrix-facing. A helical transmembrane segment spans residues 73-105 (SIVQKGLRYGMILFIISEVFFFSGFFWAFYHSS). At 106–128 (LAPTPELGGCWPPTGIHPLNPLE) the chain is on the mitochondrial intermembrane side. The chain crosses the membrane as a helical span at residues 129-152 (VPLLNTSVLLASGVSITWAHHSLM). The Mitochondrial matrix segment spans residues 153-155 (EGN). The helical transmembrane segment at 156–183 (RKNMLQGLFITISLGVYFTLLQASEYYE) threads the bilayer. Over 184–190 (ASFTISD) the chain is Mitochondrial intermembrane. Residues 191–223 (GVYGSTFFVATGFHGLHVIIGSTFLIVCFLRQL) form a helical membrane-spanning segment. Residues 224–232 (KFHFTSSHH) lie on the Mitochondrial matrix side of the membrane. A helical membrane pass occupies residues 233 to 256 (FGFEAAAWYWHFVDVVWLFLYVSI). Topologically, residues 257 to 261 (YWWGS) are mitochondrial intermembrane.

The protein belongs to the cytochrome c oxidase subunit 3 family. In terms of assembly, component of the cytochrome c oxidase (complex IV, CIV), a multisubunit enzyme composed of 14 subunits. The complex is composed of a catalytic core of 3 subunits MT-CO1, MT-CO2 and MT-CO3, encoded in the mitochondrial DNA, and 11 supernumerary subunits COX4I, COX5A, COX5B, COX6A, COX6B, COX6C, COX7A, COX7B, COX7C, COX8 and NDUFA4, which are encoded in the nuclear genome. The complex exists as a monomer or a dimer and forms supercomplexes (SCs) in the inner mitochondrial membrane with NADH-ubiquinone oxidoreductase (complex I, CI) and ubiquinol-cytochrome c oxidoreductase (cytochrome b-c1 complex, complex III, CIII), resulting in different assemblies (supercomplex SCI(1)III(2)IV(1) and megacomplex MCI(2)III(2)IV(2)).

The protein resides in the mitochondrion inner membrane. The catalysed reaction is 4 Fe(II)-[cytochrome c] + O2 + 8 H(+)(in) = 4 Fe(III)-[cytochrome c] + 2 H2O + 4 H(+)(out). In terms of biological role, component of the cytochrome c oxidase, the last enzyme in the mitochondrial electron transport chain which drives oxidative phosphorylation. The respiratory chain contains 3 multisubunit complexes succinate dehydrogenase (complex II, CII), ubiquinol-cytochrome c oxidoreductase (cytochrome b-c1 complex, complex III, CIII) and cytochrome c oxidase (complex IV, CIV), that cooperate to transfer electrons derived from NADH and succinate to molecular oxygen, creating an electrochemical gradient over the inner membrane that drives transmembrane transport and the ATP synthase. Cytochrome c oxidase is the component of the respiratory chain that catalyzes the reduction of oxygen to water. Electrons originating from reduced cytochrome c in the intermembrane space (IMS) are transferred via the dinuclear copper A center (CU(A)) of subunit 2 and heme A of subunit 1 to the active site in subunit 1, a binuclear center (BNC) formed by heme A3 and copper B (CU(B)). The BNC reduces molecular oxygen to 2 water molecules using 4 electrons from cytochrome c in the IMS and 4 protons from the mitochondrial matrix. This is Cytochrome c oxidase subunit 3 (MT-CO3) from Equus asinus (Donkey).